A 390-amino-acid polypeptide reads, in one-letter code: Probable purine permease 18 (390 aa).

Residues 1–14 (MEMTEASKQTTAEG) are compositionally biased toward polar residues. Residues 1 to 23 (MEMTEASKQTTAEGSANPEPDQI) form a disordered region. Phosphoserine is present on serine 25. The next 10 membrane-spanning stretches (helical) occupy residues 39–59 (ISVS…MLLL), 81–101 (WLQA…FFIF), 120–140 (LILL…LFAL), 148–168 (GVFT…AAII), 176–196 (WIIL…PEFG), 211–231 (WLTF…QLCF), 250–270 (VIEM…VGLF), 297–317 (IGLA…VLYV), 324–344 (VVHM…FDFM), and 348–368 (FSWP…SYFY).

The protein belongs to the purine permeases (TC 2.A.7.14) family.

It localises to the membrane. The polypeptide is Probable purine permease 18 (PUP18) (Arabidopsis thaliana (Mouse-ear cress)).